Reading from the N-terminus, the 245-residue chain is Probable phosphatase YcdX (245 aa).

Zn(2+)-binding residues include H7, H9, H15, H40, E73, H101, H131, D192, and H194.

Belongs to the PHP family. In terms of assembly, homotrimer. Requires Zn(2+) as cofactor.

The sequence is that of Probable phosphatase YcdX from Escherichia fergusonii (strain ATCC 35469 / DSM 13698 / CCUG 18766 / IAM 14443 / JCM 21226 / LMG 7866 / NBRC 102419 / NCTC 12128 / CDC 0568-73).